The primary structure comprises 68 residues: Conotoxin PnMLKM-011 (68 aa).

The first 17 residues, M1–L17, serve as a signal peptide directing secretion. Positions Q18–R51 are excised as a propeptide. 3 cysteine pairs are disulfide-bonded: C53–C65, C54–C63, and C59–C66. A Leucine amide modification is found at L67.

It belongs to the conotoxin M superfamily. As to expression, expressed by the venom duct.

The protein resides in the secreted. The sequence is that of Conotoxin PnMLKM-011 from Conus pennaceus (Feathered cone).